Consider the following 167-residue polypeptide: Endoribonuclease YbeY (167 aa).

3 residues coordinate Zn(2+): H131, H135, and H141.

Belongs to the endoribonuclease YbeY family. Requires Zn(2+) as cofactor.

It localises to the cytoplasm. In terms of biological role, single strand-specific metallo-endoribonuclease involved in late-stage 70S ribosome quality control and in maturation of the 3' terminus of the 16S rRNA. The protein is Endoribonuclease YbeY of Rickettsia africae (strain ESF-5).